Reading from the N-terminus, the 486-residue chain is Cardiolipin synthase A (486 aa).

Helical transmembrane passes span 3–23 and 38–58; these read TFYT…IAGV and MAWL…YLSF. 2 PLD phosphodiesterase domains span residues 219 to 246 and 399 to 426; these read MDLR…VDPR and EGGL…DMRS. Active-site residues include histidine 224, lysine 226, aspartate 231, histidine 404, lysine 406, and aspartate 411.

Belongs to the phospholipase D family. Cardiolipin synthase subfamily. ClsA sub-subfamily.

It is found in the cell inner membrane. It carries out the reaction 2 a 1,2-diacyl-sn-glycero-3-phospho-(1'-sn-glycerol) = a cardiolipin + glycerol. In terms of biological role, catalyzes the reversible phosphatidyl group transfer from one phosphatidylglycerol molecule to another to form cardiolipin (CL) (diphosphatidylglycerol) and glycerol. The protein is Cardiolipin synthase A of Yersinia pseudotuberculosis serotype IB (strain PB1/+).